A 380-amino-acid polypeptide reads, in one-letter code: Hydrogenase maturation factor HypD2 (380 aa).

Cys36, Cys64, and Cys67 together coordinate Fe cation.

This sequence belongs to the HypD family. [4Fe-4S] cluster serves as cofactor.

Its pathway is protein modification; [NiFe] hydrogenase maturation. In terms of biological role, involved in the maturation of [NiFe] hydrogenases. Involved in the biosynthesis of the Fe(CN)(2)CO cofactor. This is Hydrogenase maturation factor HypD2 (hypD2) from Bradyrhizobium diazoefficiens (strain JCM 10833 / BCRC 13528 / IAM 13628 / NBRC 14792 / USDA 110).